Here is a 209-residue protein sequence, read N- to C-terminus: Max dimerization protein 4 (209 aa).

Positions 6–23 are interaction with SIN3A and SIN3B; it reads LLILLEAAEYLERRDREA. The bHLH domain maps to 53–105; that stretch reads NNRSSHNELEKHRRAKLRLYLEQLKQLVPLGPDSTRHTTLSLLKRAKVHIKKL. The tract at residues 140–209 is disordered; sequence RVRTDSTGSA…CRRLGRPALS (70 aa). Acidic residues predominate over residues 153–163; sequence DDSEQEVDIEG. Basic residues predominate over residues 199 to 209; sequence HCRRLGRPALS.

Efficient DNA binding requires dimerization with another bHLH protein. Binds DNA as a heterodimer with MAX. Interacts with SIN3A AND SIN3B. Interacts with RNF17.

It localises to the nucleus. Functionally, transcriptional repressor. Binds with MAX to form a sequence-specific DNA-binding protein complex which recognizes the core sequence 5'-CAC[GA]TG-3'. Antagonizes MYC transcriptional activity by competing for MAX and suppresses MYC dependent cell transformation. This chain is Max dimerization protein 4 (MXD4), found in Homo sapiens (Human).